The sequence spans 300 residues: Estradiol 17-beta-dehydrogenase 11 (300 aa).

A signal peptide spans M1–L19. L40–V64 serves as a coordination point for NADP(+). Position 172 (S172) interacts with substrate. The Proton acceptor role is filled by Y185.

This sequence belongs to the short-chain dehydrogenases/reductases (SDR) family. 17-beta-HSD 3 subfamily.

The protein resides in the endoplasmic reticulum. It localises to the lipid droplet. It carries out the reaction 17beta-estradiol + NAD(+) = estrone + NADH + H(+). The catalysed reaction is 17beta-estradiol + NADP(+) = estrone + NADPH + H(+). Its function is as follows. Can convert androstan-3-alpha,17-beta-diol (3-alpha-diol) to androsterone in vitro, suggesting that it may participate in androgen metabolism during steroidogenesis. May act by metabolizing compounds that stimulate steroid synthesis and/or by generating metabolites that inhibit it. Has no activity toward DHEA (dehydroepiandrosterone), or A-dione (4-androste-3,17-dione), and only a slight activity toward testosterone to A-dione. The sequence is that of Estradiol 17-beta-dehydrogenase 11 (HSD17B11) from Pongo abelii (Sumatran orangutan).